A 120-amino-acid chain; its full sequence is UPF0231 protein Ent638_0667 (120 aa).

This sequence belongs to the UPF0231 family.

In Enterobacter sp. (strain 638), this protein is UPF0231 protein Ent638_0667.